We begin with the raw amino-acid sequence, 359 residues long: Peptide chain release factor 1 (359 aa).

Gln-236 is modified (N5-methylglutamine). The segment at 288–307 (QDEQDAERKSTIGTGDRSER) is disordered. Basic and acidic residues predominate over residues 293–307 (AERKSTIGTGDRSER).

This sequence belongs to the prokaryotic/mitochondrial release factor family. Methylated by PrmC. Methylation increases the termination efficiency of RF1.

The protein localises to the cytoplasm. Its function is as follows. Peptide chain release factor 1 directs the termination of translation in response to the peptide chain termination codons UAG and UAA. The polypeptide is Peptide chain release factor 1 (Streptococcus sanguinis (strain SK36)).